A 246-amino-acid polypeptide reads, in one-letter code: Large ribosomal subunit protein uL2 (246 aa).

The interval 197 to 227 (SPYAHPHGGGSHQKGGTPVPKTAPPGQKVGF) is disordered.

Belongs to the universal ribosomal protein uL2 family. As to quaternary structure, part of the 50S ribosomal subunit. Forms a bridge to the 30S subunit in the 70S ribosome.

One of the primary rRNA binding proteins. Required for association of the 30S and 50S subunits to form the 70S ribosome, for tRNA binding and peptide bond formation. It has been suggested to have peptidyltransferase activity; this is somewhat controversial. Makes several contacts with the 16S rRNA in the 70S ribosome. The sequence is that of Large ribosomal subunit protein uL2 from Pyrobaculum aerophilum (strain ATCC 51768 / DSM 7523 / JCM 9630 / CIP 104966 / NBRC 100827 / IM2).